The following is a 299-amino-acid chain: Cell division control protein 16 (299 aa).

Residues 41–223 form the Rab-GAP TBC domain; sequence GGNSSTRPYV…TIWDFLFAYG (183 aa).

It belongs to the BUB2 family.

The protein localises to the cytoplasm. It is found in the cytoskeleton. Its subcellular location is the microtubule organizing center. It localises to the spindle pole body. Functionally, has a dual role in the cell cycle. In mitosis, it is involved in maintenance of cdc2 kinase activity. It is subsequently required for regulation of septum formation. Could be involved in maintenance of cdc2 kinase activity by preventing, directly or indirectly, the degradation of cyclin or the dephosphorylation of 'Thr-167' of cdc2. The chain is Cell division control protein 16 (cdc16) from Schizosaccharomyces pombe (strain 972 / ATCC 24843) (Fission yeast).